Consider the following 87-residue polypeptide: Small ribosomal subunit protein bS20 (87 aa).

This sequence belongs to the bacterial ribosomal protein bS20 family.

In terms of biological role, binds directly to 16S ribosomal RNA. The chain is Small ribosomal subunit protein bS20 from Finegoldia magna (strain ATCC 29328 / DSM 20472 / WAL 2508) (Peptostreptococcus magnus).